The primary structure comprises 594 residues: Invasin CotH2 (594 aa).

An N-terminal signal peptide occupies residues 1–19 (MKLSLTIVSSSFLVAIAHA). Residues N77, N162, N226, N316, N441, N519, and N533 are each glycosylated (N-linked (GlcNAc...) asparagine). The tract at residues 529–565 (PPAANGTATSTNDGGNTHTAAGESKPASSSESSGSKI) is disordered. The segment covering 534-547 (GTATSTNDGGNTHT) has biased composition (polar residues). Low complexity predominate over residues 548 to 565 (AAGESKPASSSESSGSKI). S571 carries the GPI-anchor amidated serine lipid modification. The propeptide at 572-594 (GASRSAVSTVLLGVTALVATAIF) is removed in mature form.

As to quaternary structure, interacts with host epithelial cell surface HSPA5/BiP protein.

It localises to the cell membrane. Promotes invasion of host epithelial cells by adhering to receptors on the host cell surface to facilitate endocytosis of the pathogen into host cells. Binds HSPA5/BiP protein on the cell surface of host epithelial cells. The chain is Invasin CotH2 from Rhizopus delemar (strain RA 99-880 / ATCC MYA-4621 / FGSC 9543 / NRRL 43880) (Mucormycosis agent).